The following is a 223-amino-acid chain: Urease accessory protein UreF (223 aa).

It belongs to the UreF family. As to quaternary structure, ureD, UreF and UreG form a complex that acts as a GTP-hydrolysis-dependent molecular chaperone, activating the urease apoprotein by helping to assemble the nickel containing metallocenter of UreC. The UreE protein probably delivers the nickel.

It is found in the cytoplasm. Functionally, required for maturation of urease via the functional incorporation of the urease nickel metallocenter. This chain is Urease accessory protein UreF, found in Rhizobium johnstonii (strain DSM 114642 / LMG 32736 / 3841) (Rhizobium leguminosarum bv. viciae).